The following is a 185-amino-acid chain: Transmembrane protein 252 (185 aa).

The next 2 helical transmembrane spans lie at 8–28 (VLCALSLLTGFLMICLGGFFI) and 39–59 (LVVAYVLLPLGFVILLSGIFW). The interval 125-149 (YTETSLEPQDKDKNDPQPEAPPPYP) is disordered.

It is found in the membrane. The protein is Transmembrane protein 252 (Tmem252) of Rattus norvegicus (Rat).